Consider the following 707-residue polypeptide: MAEEISDLHDVRNIGIMAHIDAGKTTTTERILFYTGKNYKIGETHDGASTMDFMAQEQERGITIQSAATTCFWSRQSHDTKDKFQINIIDTPGHVDFTAEVERSLRVLDGAVAVFDGKEGVEPQSETVWRQADKYGVPRICFINKMDKLGANFYYSVDTIKEKLGATPIVMQLPIGSENDFTGVVDLVEMQAYVWNGTEELGAKYDTTEIPDDLKDKAQEYHEKLVEAAAEADDDLMNKFFEDGDLSKEDIRAGVRKLTIAKEAFPIFCGSAFKDKGVQPMLDGVVDYLPSPEDVPAIKGYKPGDESVEIDRHPVKSDPFAALVFKISTHPFYGKLVFVRVYSGSVVPGDSVLDSTREKKERIGKIFQMHADKENPMDRADAGNIYTFVGLKNVTTGDTLCAIDDPITLDSMTFPDPVIQVAVEPKTKADQEKMGIALSKLAEEDPTFQVTTDEESGQTLIAGMGELQLDIIVDRMRREFKVECNQGKPQVAYRETIRKAVMDQGYTHKKQTGGSGQFAKVLMNFEPLDTTEGKTFEFENKVTGGHISAEFIGPIEAGVKEAMESGVLAGFPVVGVKATVTDGQMHPVDSSEMAFKLAGSMCFKEAAPKAKPVILEPIMKVEVRTPEEYMGEVIGDLNQRRGNIQSMTDGVGVKVIDAKVPLSEMFGYIGDLRSKTQGRAMFTMEMDSYDEVPKSVSEEIIKAQRGE.

The tr-type G domain maps to 9-293 (HDVRNIGIMA…GVVDYLPSPE (285 aa)). Residues 18–25 (AHIDAGKT), 90–94 (DTPGH), and 144–147 (NKMD) each bind GTP.

Belongs to the TRAFAC class translation factor GTPase superfamily. Classic translation factor GTPase family. EF-G/EF-2 subfamily.

The protein resides in the cytoplasm. In terms of biological role, catalyzes the GTP-dependent ribosomal translocation step during translation elongation. During this step, the ribosome changes from the pre-translocational (PRE) to the post-translocational (POST) state as the newly formed A-site-bound peptidyl-tRNA and P-site-bound deacylated tRNA move to the P and E sites, respectively. Catalyzes the coordinated movement of the two tRNA molecules, the mRNA and conformational changes in the ribosome. The polypeptide is Elongation factor G (Bifidobacterium longum (strain DJO10A)).